A 738-amino-acid polypeptide reads, in one-letter code: Propionyl-CoA carboxylase alpha chain, mitochondrial (738 aa).

The Biotin carboxylation domain occupies 62 to 509 (KFDKILIANR…TTKYLPEVYP (448 aa)). ATP-binding positions include Lys177, 209–270 (SREI…PRHI), Glu261, and Asn296. The 198-residue stretch at 181 to 378 (KKIATAARVS…IVQQMLRVAY (198 aa)) folds into the ATP-grasp domain. Residues Glu336, Glu349, and Asn351 each contribute to the Mg(2+) site. 3 residues coordinate Mn(2+): Glu336, Glu349, and Asn351. Residue Arg353 is part of the active site. A biotin-binding site is contributed by Phe409. The Biotinyl-binding domain occupies 663–738 (KAKVDLSTVV…DEGEVLVELE (76 aa)). Lys704 bears the N6-biotinyllysine mark.

In terms of assembly, the holoenzyme is a dodecamer composed of 6 alpha subunits and 6 beta subunits. Interacts with sir-2.2. It depends on biotin as a cofactor. Requires Mg(2+) as cofactor. Mn(2+) is required as a cofactor. Post-translationally, the biotin cofactor is covalently attached to the C-terminal biotinyl-binding domain and is required for the catalytic activity.

The protein resides in the mitochondrion matrix. It carries out the reaction propanoyl-CoA + hydrogencarbonate + ATP = (S)-methylmalonyl-CoA + ADP + phosphate + H(+). It catalyses the reaction butanoyl-CoA + hydrogencarbonate + ATP = (2S)-ethylmalonyl-CoA + ADP + phosphate + H(+). It functions in the pathway metabolic intermediate metabolism; propanoyl-CoA degradation; succinyl-CoA from propanoyl-CoA: step 1/3. Its function is as follows. This is one of the 2 subunits of the biotin-dependent propionyl-CoA carboxylase (PCC), a mitochondrial enzyme involved in the catabolism of odd chain fatty acids, branched-chain amino acids isoleucine, threonine, methionine, and valine and other metabolites. Propionyl-CoA carboxylase catalyzes the carboxylation of propionyl-CoA/propanoyl-CoA to D-methylmalonyl-CoA/(S)-methylmalonyl-CoA. Within the holoenzyme, the alpha subunit catalyzes the ATP-dependent carboxylation of the biotin carried by the biotin carboxyl carrier (BCC) domain, while the beta subunit then transfers the carboxyl group from carboxylated biotin to propionyl-CoA. Propionyl-CoA carboxylase also significantly acts on butyryl-CoA/butanoyl-CoA, which is converted to ethylmalonyl-CoA/(2S)-ethylmalonyl-CoA. Other alternative minor substrates include (2E)-butenoyl-CoA/crotonoyl-CoA. In Caenorhabditis briggsae, this protein is Propionyl-CoA carboxylase alpha chain, mitochondrial (pcca-1).